The chain runs to 347 residues: GMP reductase (347 aa).

108-131 (ADFQKTKDVMALSDELIFICIDIA) is a binding site for NADP(+). Residues glycine 181 and glycine 183 each coordinate K(+). Cysteine 186 (thioimidate intermediate) is an active-site residue. 216–239 (IIGDGGCTCPGDVAKAFGGGADFV) lines the NADP(+) pocket.

The protein belongs to the IMPDH/GMPR family. GuaC type 1 subfamily. As to quaternary structure, homotetramer.

The enzyme catalyses IMP + NH4(+) + NADP(+) = GMP + NADPH + 2 H(+). In terms of biological role, catalyzes the irreversible NADPH-dependent deamination of GMP to IMP. It functions in the conversion of nucleobase, nucleoside and nucleotide derivatives of G to A nucleotides, and in maintaining the intracellular balance of A and G nucleotides. This chain is GMP reductase, found in Vibrio cholerae serotype O1 (strain ATCC 39541 / Classical Ogawa 395 / O395).